We begin with the raw amino-acid sequence, 209 residues long: PRA1 family protein A3 (209 aa).

The next 4 membrane-spanning stretches (helical) occupy residues 51–72 (LYYY…ALIT), 76–98 (AILG…AATF), 143–163 (LVFV…SCGL), and 164–184 (LWVL…ASLR).

This sequence belongs to the PRA1 family.

The protein resides in the endosome membrane. In terms of biological role, may be involved in both secretory and endocytic intracellular trafficking in the endosomal/prevacuolar compartments. This Arabidopsis thaliana (Mouse-ear cress) protein is PRA1 family protein A3 (PRA1A3).